We begin with the raw amino-acid sequence, 217 residues long: UPF0323 lipoprotein HPSH_01205 (217 aa).

The signal sequence occupies residues 1-27; it reads MKKPYRKISDYAIVGGLSALVMVSIVG. Cys-28 carries N-palmitoyl cysteine lipidation. The S-diacylglycerol cysteine moiety is linked to residue Cys-28. Positions 160-171 are enriched in polar residues; it reads QRTYKSPQAYQR. The segment at 160–217 is disordered; the sequence is QRTYKSPQAYQRSQNSFSKSAPSASSMGGASKGQSGFFGSSRPTSSPAVSSGTRGFNS. Residues 172–210 show a composition bias toward low complexity; sequence SQNSFSKSAPSASSMGGASKGQSGFFGSSRPTSSPAVSS.

It belongs to the UPF0323 family.

Its subcellular location is the cell membrane. The chain is UPF0323 lipoprotein HPSH_01205 from Helicobacter pylori (strain Shi470).